The sequence spans 117 residues: Large ribosomal subunit protein bL20c (117 aa).

Belongs to the bacterial ribosomal protein bL20 family.

Its subcellular location is the plastid. The protein resides in the chloroplast. In terms of biological role, binds directly to 23S ribosomal RNA and is necessary for the in vitro assembly process of the 50S ribosomal subunit. It is not involved in the protein synthesizing functions of that subunit. In Bigelowiella natans (Pedinomonas minutissima), this protein is Large ribosomal subunit protein bL20c (rpl20).